A 650-amino-acid chain; its full sequence is Acetyl-coenzyme A synthetase (650 aa).

CoA is bound by residues 191-194 (RGGR), T311, and N335. ATP-binding positions include 387 to 389 (GEP), 411 to 416 (DTWWQT), D500, and R515. Residue S523 participates in CoA binding. Residue R526 coordinates ATP. Mg(2+) contacts are provided by V537, H539, and V542. R584 provides a ligand contact to CoA. At K609 the chain carries N6-acetyllysine.

It belongs to the ATP-dependent AMP-binding enzyme family. The cofactor is Mg(2+). In terms of processing, acetylated. Deacetylation by the SIR2-homolog deacetylase activates the enzyme.

The catalysed reaction is acetate + ATP + CoA = acetyl-CoA + AMP + diphosphate. Its function is as follows. Catalyzes the conversion of acetate into acetyl-CoA (AcCoA), an essential intermediate at the junction of anabolic and catabolic pathways. AcsA undergoes a two-step reaction. In the first half reaction, AcsA combines acetate with ATP to form acetyl-adenylate (AcAMP) intermediate. In the second half reaction, it can then transfer the acetyl group from AcAMP to the sulfhydryl group of CoA, forming the product AcCoA. The polypeptide is Acetyl-coenzyme A synthetase (Shewanella sp. (strain W3-18-1)).